The sequence spans 405 residues: Glucose-1-phosphate adenylyltransferase 1 (405 aa).

Residues tyrosine 96, glycine 161, 176–177 (EK), and serine 194 contribute to the alpha-D-glucose 1-phosphate site.

It belongs to the bacterial/plant glucose-1-phosphate adenylyltransferase family. Homotetramer.

The enzyme catalyses alpha-D-glucose 1-phosphate + ATP + H(+) = ADP-alpha-D-glucose + diphosphate. The protein operates within glycan biosynthesis; glycogen biosynthesis. Involved in the biosynthesis of ADP-glucose, a building block required for the elongation reactions to produce glycogen. Catalyzes the reaction between ATP and alpha-D-glucose 1-phosphate (G1P) to produce pyrophosphate and ADP-Glc. The polypeptide is Glucose-1-phosphate adenylyltransferase 1 (Vibrio cholerae serotype O1 (strain ATCC 39315 / El Tor Inaba N16961)).